Consider the following 100-residue polypeptide: UPF0213 protein CKO_04549 (100 aa).

The 76-residue stretch at 2–77 folds into the GIY-YIG domain; the sequence is TPWYLYLIRT…KRLTKRQKER (76 aa).

This sequence belongs to the UPF0213 family.

The sequence is that of UPF0213 protein CKO_04549 from Citrobacter koseri (strain ATCC BAA-895 / CDC 4225-83 / SGSC4696).